A 327-amino-acid chain; its full sequence is Mitochondrial thiamine pyrophosphate carrier 1 (327 aa).

Solcar repeat units lie at residues 13-114, 126-214, and 222-317; these read GSKL…AAQL, PAAA…LRAP, and FWGG…VLRA. 6 helical membrane passes run 16–36, 95–111, 132–152, 189–209, 223–245, and 292–309; these read LQVV…IAPL, LLYI…YRSA, FVAG…LDLL, GIGP…AAYE, WGGQ…VFPL, and GLTV…VTMW.

Belongs to the mitochondrial carrier (TC 2.A.29) family.

The protein localises to the mitochondrion inner membrane. In terms of biological role, mitochondrial transporter that mediates uptake of thiamine pyrophosphate (ThPP) into mitochondria. This Pyricularia oryzae (strain 70-15 / ATCC MYA-4617 / FGSC 8958) (Rice blast fungus) protein is Mitochondrial thiamine pyrophosphate carrier 1 (TPC1).